The sequence spans 367 residues: AA9 family lytic polysaccharide monooxygenase A (367 aa).

A signal peptide spans 1-20 (MKSSTFGMLALAAAAKLVSA). Residue histidine 21 participates in Cu(2+) binding. The tract at residues 37–56 (GNSESGYIRSPPSNSPITDV) is disordered. Residues cysteine 63 and cysteine 183 are joined by a disulfide bond. Position 102 (histidine 102) interacts with Cu(2+). Histidine 169 contacts O2. Tyrosine 180 contributes to the Cu(2+) binding site. The interval 234–287 (GASGSSSSPSASASASAPAATSAAPAPSSFTTIAKQPATSSTEAPSTENTSTTS) is disordered. 2 stretches are compositionally biased toward low complexity: residues 235-262 (ASGS…APSS) and 270-287 (PATS…STTS). N-linked (GlcNAc...) asparagine glycosylation occurs at asparagine 282. A CBM1 domain is found at 329 to 365 (GAVKEWYQCGGLNYKGSTQCEEGLTCKKWNPYYYQCI).

The protein belongs to the polysaccharide monooxygenase AA9 family. The cofactor is Cu(2+).

Its subcellular location is the secreted. The catalysed reaction is [(1-&gt;4)-beta-D-glucosyl]n+m + reduced acceptor + O2 = 4-dehydro-beta-D-glucosyl-[(1-&gt;4)-beta-D-glucosyl]n-1 + [(1-&gt;4)-beta-D-glucosyl]m + acceptor + H2O.. Functionally, lytic polysaccharide monooxygenase (LPMO) that depolymerizes crystalline and amorphous polysaccharides via the oxidation of scissile alpha- or beta-(1-4)-glycosidic bonds, yielding C4 oxidation products. Catalysis by LPMOs requires the reduction of the active-site copper from Cu(II) to Cu(I) by a reducing agent and H(2)O(2) or O(2) as a cosubstrate. Active on cellulose and cello-oligosaccharides, as well as plant cell wall-derived hemicellulosic polysaccharides. Also active on cello-oligosaccharides such as cellohexaose, cellopentaose or cellotetraose. The polypeptide is AA9 family lytic polysaccharide monooxygenase A (Aspergillus oryzae (strain ATCC 42149 / RIB 40) (Yellow koji mold)).